We begin with the raw amino-acid sequence, 209 residues long: Glutathione S-transferase 1, isoform C (209 aa).

One can recognise a GST N-terminal domain in the interval 1 to 80; that stretch reads MDFYYLPGSA…YLAEKYGKDD (80 aa). Glutathione contacts are provided by residues Ser9, 50–52, and 64–66; these read HCI and ESR. Positions 86–207 constitute a GST C-terminal domain; sequence DPQKRAVVNQ…AGIEEFKKYF (122 aa).

This sequence belongs to the GST superfamily. Theta family. Homodimer.

The catalysed reaction is RX + glutathione = an S-substituted glutathione + a halide anion + H(+). The enzyme catalyses 1,1,1-trichloro-2,2-bis(4-chlorophenyl)ethane = 1,1-dichloro-2,2-bis(4-chlorophenyl)ethylene + chloride + H(+). Functionally, conjugation of reduced glutathione to a wide number of exogenous and endogenous hydrophobic electrophiles. Has DDT dehydrochlorinase activity. This Anopheles gambiae (African malaria mosquito) protein is Glutathione S-transferase 1, isoform C (GstD1).